We begin with the raw amino-acid sequence, 357 residues long: Protein-arginine kinase (357 aa).

One can recognise a Phosphagen kinase C-terminal domain in the interval 24–255; it reads IVISTRLRIA…RQIIEQERVA (232 aa). ATP is bound by residues 27 to 31, His92, Arg126, 177 to 181, and 208 to 213; these read STRLR, RASVM, and RGIYGE. Residues 338–343 carry the RDXXRA motif of the pArg binding pocket involved in allosteric regulation motif; that stretch reads RDERRA.

The protein belongs to the ATP:guanido phosphotransferase family.

It catalyses the reaction L-arginyl-[protein] + ATP = N(omega)-phospho-L-arginyl-[protein] + ADP + H(+). With respect to regulation, appears to be allosterically activated by the binding of pArg-containing polypeptides to the pArg-binding pocket localized in the C-terminal domain of McsB. Its function is as follows. Catalyzes the specific phosphorylation of arginine residues in proteins. This is Protein-arginine kinase from Brevibacillus brevis (strain 47 / JCM 6285 / NBRC 100599).